The following is a 142-amino-acid chain: Large ribosomal subunit protein uL13 (142 aa).

The protein belongs to the universal ribosomal protein uL13 family. In terms of assembly, part of the 50S ribosomal subunit.

Its function is as follows. This protein is one of the early assembly proteins of the 50S ribosomal subunit, although it is not seen to bind rRNA by itself. It is important during the early stages of 50S assembly. This chain is Large ribosomal subunit protein uL13, found in Wigglesworthia glossinidia brevipalpis.